The sequence spans 598 residues: Urease subunit alpha (598 aa).

One can recognise a Urease domain in the interval 136 to 598 (GGLDTHVHWL…APLAQRYFLF (463 aa)). Ni(2+)-binding residues include histidine 141, histidine 143, and lysine 223. An N6-carboxylysine modification is found at lysine 223. Histidine 225 is a substrate binding site. Residues histidine 252 and histidine 278 each coordinate Ni(2+). The active-site Proton donor is the histidine 326. Aspartate 366 provides a ligand contact to Ni(2+).

This sequence belongs to the metallo-dependent hydrolases superfamily. Urease alpha subunit family. Heterotrimer of UreA (gamma), UreB (beta) and UreC (alpha) subunits. Three heterotrimers associate to form the active enzyme. Ni cation serves as cofactor. Carboxylation allows a single lysine to coordinate two nickel ions.

Its subcellular location is the cytoplasm. It catalyses the reaction urea + 2 H2O + H(+) = hydrogencarbonate + 2 NH4(+). Its pathway is nitrogen metabolism; urea degradation; CO(2) and NH(3) from urea (urease route): step 1/1. The sequence is that of Urease subunit alpha from Ureaplasma urealyticum serovar 10 (strain ATCC 33699 / Western).